We begin with the raw amino-acid sequence, 1496 residues long: Chromosome partition protein MukB (1496 aa).

63-70 (GGNGAGKS) contributes to the ATP binding site. Coiled coils occupy residues 328-493 (KLEL…QRLS) and 536-632 (KMQA…APAW). The tract at residues 694-811 (PDGSDDVRLN…EVPLFGRAAR (118 aa)) is flexible hinge. Coiled-coil stretches lie at residues 861–1171 (NPEE…SAEE) and 1235–1291 (IDAI…LQNI). The span at 1082–1091 (RARSRRDELQ) shows a compositional bias: basic and acidic residues. The interval 1082–1101 (RARSRRDELQQRLSQQRSRK) is disordered.

The protein belongs to the SMC family. MukB subfamily. As to quaternary structure, homodimerization via its hinge domain. Binds to DNA via its C-terminal region. Interacts, and probably forms a ternary complex, with MukE and MukF via its C-terminal region. The complex formation is stimulated by calcium or magnesium. Interacts with tubulin-related protein FtsZ.

It localises to the cytoplasm. Its subcellular location is the nucleoid. Functionally, plays a central role in chromosome condensation, segregation and cell cycle progression. Functions as a homodimer, which is essential for chromosome partition. Involved in negative DNA supercoiling in vivo, and by this means organize and compact chromosomes. May achieve or facilitate chromosome segregation by condensation DNA from both sides of a centrally located replisome during cell division. This chain is Chromosome partition protein MukB, found in Actinobacillus pleuropneumoniae serotype 7 (strain AP76).